Reading from the N-terminus, the 379-residue chain is Guanine nucleotide-binding protein G(s) subunit alpha (379 aa).

The segment at 1–29 (MGCFGSAGAKGDAEENKKRKEANKNINKQ) is disordered. The N-palmitoyl glycine moiety is linked to residue glycine 2. Cysteine 3 carries S-palmitoyl cysteine lipidation. Residues 39 to 379 (ATHRLLLLGA…RMHLRQYELL (341 aa)) form the G-alpha domain. A G1 motif region spans residues 42–55 (RLLLLGAGESGKST). GTP is bound by residues 47–54 (GAGESGKS), 183–189 (LRCRVLT), 208–212 (DVGGQ), 277–280 (NKQD), and alanine 351. Positions 54 and 189 each coordinate Mg(2+). The G2 motif stretch occupies residues 181–189 (DILRCRVLT). The tract at residues 204-213 (FHMFDVGGQR) is G3 motif. The interval 273-280 (ILFLNKQD) is G4 motif. Positions 349–354 (TCAVDT) are G5 motif.

Belongs to the G-alpha family. G(s) subfamily. In terms of assembly, g proteins are composed of 3 units; alpha, beta and gamma. The alpha chain contains the guanine nucleotide binding site.

Functionally, guanine nucleotide-binding proteins (G proteins) are involved as modulators or transducers in various transmembrane signaling systems. The G(s) protein is involved in hormonal regulation of adenylate cyclase: it activates the cyclase in response to beta-adrenergic stimuli. This is Guanine nucleotide-binding protein G(s) subunit alpha from Homarus americanus (American lobster).